Here is a 215-residue protein sequence, read N- to C-terminus: Thiamine import ATP-binding protein ThiQ (215 aa).

In terms of domain architecture, ABC transporter spans 2–215 (IYLNNVILND…GQISQLQKGV (214 aa)). 32–39 (GESGAGKS) lines the ATP pocket.

It belongs to the ABC transporter superfamily. Thiamine importer (TC 3.A.1.19.1) family. The complex is composed of two ATP-binding proteins (ThiQ), two transmembrane proteins (ThiP) and a solute-binding protein (ThiB).

It is found in the cell inner membrane. It catalyses the reaction thiamine(out) + ATP + H2O = thiamine(in) + ADP + phosphate + H(+). Functionally, part of the ABC transporter complex ThiBPQ involved in thiamine import. Responsible for energy coupling to the transport system. The protein is Thiamine import ATP-binding protein ThiQ of Haemophilus influenzae (strain ATCC 51907 / DSM 11121 / KW20 / Rd).